We begin with the raw amino-acid sequence, 834 residues long: Prominin-2 (834 aa).

The N-terminal stretch at 1–26 (MKHTLALLAPLLGLGLGLALSQLAAG) is a signal peptide. At 27–106 (ATDCKFLGPA…NEVVRYEAGY (80 aa)) the chain is on the extracellular side. Residues 107 to 127 (VVCAVIAGLYLLLVPTAGLCF) form a helical membrane-spanning segment. At 128-153 (CCCRCHRRCGGRVKTEHKALACERAA) the chain is on the cytoplasmic side. A helical membrane pass occupies residues 154–174 (LMVFLLLTTLLLLIGVVCAFV). At 175-426 (TNQRTHEQMG…EVQRYETYRW (252 aa)) the chain is on the extracellular side. N-linked (GlcNAc...) asparagine glycosylation is present at Asn-270. The helical transmembrane segment at 427–447 (IVGCVLCSVVLFVVLCNLLGL) threads the bilayer. The Cytoplasmic portion of the chain corresponds to 448–472 (NLGIWGLSARDDPSHPEAKGEAGAR). Residues 473–493 (FLMAGVGLSFLFAAPLILLVF) form a helical membrane-spanning segment. At 494–779 (ATFLVGGNVQ…LCDMMADPWN (286 aa)) the chain is on the extracellular side. Ser-727 carries the phosphoserine modification. Residues 780–800 (AFWFCLAWCTFFLIPSIIFAV) traverse the membrane as a helical segment. Over 801-834 (KTSKYFRPIRKRLSSTSSEETQLFHIPRVTSLKL) the chain is Cytoplasmic. Ser-818 carries the post-translational modification Phosphoserine.

The protein belongs to the prominin family. In terms of assembly, binds cholesterol. Post-translationally, glycosylated. In terms of tissue distribution, present in saliva within small membrane particles (at protein level). Expressed in kidney, prostate, trachea, esophagus, salivary gland, thyroid gland, mammary gland adrenal gland, placenta, stomach, spinal cord and liver. In submucosal tumor, expressed in spindle-shaped or stellate stromal cells. Expressed in prostate cancer cell lines.

Its subcellular location is the apical cell membrane. The protein resides in the basolateral cell membrane. It localises to the cell projection. The protein localises to the microvillus membrane. It is found in the cilium membrane. The protein is Prominin-2 (PROM2) of Homo sapiens (Human).